A 118-amino-acid chain; its full sequence is Small integral membrane protein 17 (118 aa).

Positions 1 to 84 (MQSLRPEQTR…DDESEGSQGF (84 aa)) are disordered. Positions 13–42 (LEPERTKTLLPRESRAWEKPPHPACTKDWE) are enriched in basic and acidic residues. The chain crosses the membrane as a helical span at residues 96-116 (IVLVVCVLFLFLVLTGMPMMF).

It is found in the membrane. The protein is Small integral membrane protein 17 (SMIM17) of Homo sapiens (Human).